The following is a 363-amino-acid chain: Protein RecA (363 aa).

79 to 86 (GPESSGKT) lines the ATP pocket.

This sequence belongs to the RecA family.

The protein resides in the cytoplasm. Can catalyze the hydrolysis of ATP in the presence of single-stranded DNA, the ATP-dependent uptake of single-stranded DNA by duplex DNA, and the ATP-dependent hybridization of homologous single-stranded DNAs. It interacts with LexA causing its activation and leading to its autocatalytic cleavage. This chain is Protein RecA, found in Methylobacterium radiotolerans (strain ATCC 27329 / DSM 1819 / JCM 2831 / NBRC 15690 / NCIMB 10815 / 0-1).